We begin with the raw amino-acid sequence, 351 residues long: Cytoplasmic dynein 2 light intermediate chain 1 (351 aa).

It belongs to the dynein light intermediate chain family. In terms of assembly, light intermediate chain of the cytoplasmic dynein complex 2, a multisubunit complex composed at least of eleven different proteins. The cytoplasmic dynein 2 complex consists of two catalytic heavy chains (HCs) and a number of non-catalytic subunits presented by intermediate chains (ICs), light intermediate chains (LICs) and light chains (LCs). Among them, a heavy chain (DYNC2H1), two intermediate chains (DYNC2I2 and DYNC2I1), a light intermediate chain (DYNC2LI1), and a light chain (DYNLT2B) are unique to the dynein-2 complex, but a subset of light chains are also shared by dynein-1 and dynein-2 complexes. Dynein-2 complex is built around two copies of cytoplasmic dynein 2 heavy chain 1 (DYNC2H1). The C-terminal region of DYNC2H1 forms the motor domain, which converts the energy from ATP hydrolysis into movement. Its N-terminal region forms the tail, an extended structure that binds the other subunits and holds the two heavy chains in a homodimer. Interacts with DYNC2H1 (via N-terminus); this interaction stabilizes the dynein-2 complex structure. As to expression, expressed in bone, brain, kidney, and cartilage. Lower expression in heart, liver, lung, placenta and thymus.

The protein resides in the golgi apparatus. The protein localises to the cytoplasm. It is found in the cell projection. Its subcellular location is the cilium. It localises to the cytoskeleton. The protein resides in the cilium basal body. The protein localises to the cilium axoneme. It is found in the microtubule organizing center. Its subcellular location is the centrosome. In terms of biological role, acts as one of several non-catalytic accessory components of the cytoplasmic dynein 2 complex (dynein-2 complex), a motor protein complex that drives the movement of cargos along microtubules within cilia and flagella in concert with the intraflagellar transport (IFT) system, facilitating the assembly of these organelles. Involved in the regulation of ciliary length. The sequence is that of Cytoplasmic dynein 2 light intermediate chain 1 (DYNC2LI1) from Homo sapiens (Human).